The sequence spans 415 residues: Serine/threonine transporter SstT (415 aa).

Helical transmembrane passes span 15 to 35, 45 to 65, 85 to 105, 142 to 162, 193 to 213, 217 to 237, 301 to 321, and 331 to 351; these read GSLVKQILVGLIAGILLAWLA, LGTLFVGALKAVAPVLVWILV, ILYILGTFFAALVAVAGSFIF, ALLNGNYIGILAWAIGLGIAL, VGIFGLVSATIAETGFNALLG, LLVVLLSCMLVMALVVNPLIV, GAAVTIPVLTLAAVNTLGIPV, and VVSAICACGASGVAGGSLLLI.

Belongs to the dicarboxylate/amino acid:cation symporter (DAACS) (TC 2.A.23) family.

The protein resides in the cell inner membrane. It catalyses the reaction L-serine(in) + Na(+)(in) = L-serine(out) + Na(+)(out). The enzyme catalyses L-threonine(in) + Na(+)(in) = L-threonine(out) + Na(+)(out). Its function is as follows. Involved in the import of serine and threonine into the cell, with the concomitant import of sodium (symport system). The polypeptide is Serine/threonine transporter SstT (Photorhabdus laumondii subsp. laumondii (strain DSM 15139 / CIP 105565 / TT01) (Photorhabdus luminescens subsp. laumondii)).